The following is a 205-amino-acid chain: Auxin-responsive protein IAA8 (205 aa).

Positions 1 to 48 are disordered; that stretch reads MECMASTEESLPASSSMDSCSGELPTTTTTAPAQSTASSGCRPPATAA. Positions 7 to 19 are enriched in polar residues; the sequence is TEESLPASSSMDS. Low complexity predominate over residues 25–39; that stretch reads PTTTTTAPAQSTASS. Positions 58 to 62 match the EAR-like (transcriptional repression) motif; that stretch reads LRLGL. The segment at 71–98 is disordered; it reads DGNNPSTPRSSLTTATVTADRGGGGGGH. Polar residues predominate over residues 73–87; sequence NNPSTPRSSLTTATV. The PB1 domain occupies 103–199; the sequence is SLFVKVYMEG…KRLRIARADD (97 aa).

The protein belongs to the Aux/IAA family. As to quaternary structure, homodimers and heterodimers. Highly expressed in green shoots. Expressed in flowers.

The protein resides in the nucleus. Aux/IAA proteins are short-lived transcriptional factors that function as repressors of early auxin response genes at low auxin concentrations. In Oryza sativa subsp. japonica (Rice), this protein is Auxin-responsive protein IAA8 (IAA8).